We begin with the raw amino-acid sequence, 207 residues long: Dephospho-CoA kinase (207 aa).

Residues threonine 10–serine 207 form the DPCK domain. ATP is bound at residue glycine 18–alanine 23.

It belongs to the CoaE family.

Its subcellular location is the cytoplasm. It carries out the reaction 3'-dephospho-CoA + ATP = ADP + CoA + H(+). It participates in cofactor biosynthesis; coenzyme A biosynthesis; CoA from (R)-pantothenate: step 5/5. Catalyzes the phosphorylation of the 3'-hydroxyl group of dephosphocoenzyme A to form coenzyme A. The chain is Dephospho-CoA kinase from Pseudomonas fluorescens (strain ATCC BAA-477 / NRRL B-23932 / Pf-5).